Reading from the N-terminus, the 245-residue chain is 8-amino-3,8-dideoxy-manno-octulosonate cytidylyltransferase (245 aa).

Belongs to the KdsB family.

It localises to the cytoplasm. The enzyme catalyses 8-amino-3,8-dideoxy-alpha-D-manno-octulosonate + CTP = CMP-8-amino-3,8-dideoxy-alpha-D-manno-oct-2-ulosonate + diphosphate. Its pathway is bacterial outer membrane biogenesis; lipopolysaccharide biosynthesis. Activates KDO8N (a required 8-carbon sugar) for incorporation into bacterial lipopolysaccharide in the Shewanella genus. The sequence is that of 8-amino-3,8-dideoxy-manno-octulosonate cytidylyltransferase from Shewanella baltica (strain OS195).